The primary structure comprises 398 residues: Succinate--CoA ligase [ADP-forming] subunit beta (398 aa).

Residues 9–254 (KALLKSYGAP…TTEEDEKEIE (246 aa)) enclose the ATP-grasp domain. Residues lysine 46, 53–55 (GRG), glutamate 109, alanine 112, and glutamate 117 contribute to the ATP site. Residues asparagine 209 and aspartate 223 each contribute to the Mg(2+) site. Substrate-binding positions include asparagine 274 and 331–333 (GIM).

The protein belongs to the succinate/malate CoA ligase beta subunit family. Heterotetramer of two alpha and two beta subunits. Requires Mg(2+) as cofactor.

The catalysed reaction is succinate + ATP + CoA = succinyl-CoA + ADP + phosphate. The enzyme catalyses GTP + succinate + CoA = succinyl-CoA + GDP + phosphate. It participates in carbohydrate metabolism; tricarboxylic acid cycle; succinate from succinyl-CoA (ligase route): step 1/1. Succinyl-CoA synthetase functions in the citric acid cycle (TCA), coupling the hydrolysis of succinyl-CoA to the synthesis of either ATP or GTP and thus represents the only step of substrate-level phosphorylation in the TCA. The beta subunit provides nucleotide specificity of the enzyme and binds the substrate succinate, while the binding sites for coenzyme A and phosphate are found in the alpha subunit. The polypeptide is Succinate--CoA ligase [ADP-forming] subunit beta (Sinorhizobium medicae (strain WSM419) (Ensifer medicae)).